The primary structure comprises 223 residues: Glycolipid transfer protein 2 (223 aa).

A ganglioside GM3 (d18:1(4E)) is bound by residues aspartate 69, asparagine 73, tryptophan 116, and histidine 155.

This sequence belongs to the GLTP family.

Functionally, transfers glycolipids in vitro. This Arabidopsis thaliana (Mouse-ear cress) protein is Glycolipid transfer protein 2.